The primary structure comprises 1382 residues: Suppressor of organelle fusion 2 (1382 aa).

The BEACH domain maps to 229–463; the sequence is RIPLDEATSN…QLFNRPHPIR (235 aa). WD repeat units follow at residues 1094–1133 and 1140–1176; these read GHQE…DEIG and KHTR…LLAQ.

The protein belongs to the WD repeat WDR81 family. In terms of assembly, interacts with sorf-1; the interaction is direct. Interacts with bec-1.

The protein localises to the early endosome. It is found in the late endosome. Its subcellular location is the cytoplasm. Functionally, together with sorf-1 negatively regulates the levels of phosphatidylinositol 3-phosphate (PtdIns3P) to enable the conversion of early endosomes to late endosomes. Binds to sorf-1 and the sorf-1-sorf-2 complex likely acts through bec-1, a non-catalytic subunit of phosphatidylinositol 3-kinase (PI3K), to suppress PI3K activity, thereby negatively regulating endosomal PtdIns3P levels. The chain is Suppressor of organelle fusion 2 from Caenorhabditis elegans.